We begin with the raw amino-acid sequence, 393 residues long: MNRINILVPDLPESVNDAVVVKWYKKIGEQISSEDNIVDIETDKVMLEVSAPCNGILNEILEKEGSIVKSNQILGNIVESKNIESKTKSKLEKSNKYFIKDKNFNISFKEKIYNFPPSIRRIIRIKKNKEIFNELNYIKNQENIIEEKLNDQSFSNEKEKKIYENRIKMTRLRQKIAERLLETKNNTAMLTTFNEVNMQPIISLRKKYGEFFEKKHGVRIGFMPFFVKAVVESLKKFPEINASIDKNDIVYYKNIDVSIAVSTPRGVITPVLRNADNMSMADIEKKIKEFSIKGIENKIKIEELIGGNFTITNGGIFGSLMSTPIINPPQSAILGMHLIKERPMAINGKVKILPMMYLALSYDHRLIDGKESVSFLVTIKNILEDFNRIIINV.

One can recognise a Lipoyl-binding domain in the interval 3–78; the sequence is RINILVPDLP…KSNQILGNIV (76 aa). Lysine 44 carries the N6-lipoyllysine modification. Residues histidine 364 and aspartate 368 contribute to the active site.

This sequence belongs to the 2-oxoacid dehydrogenase family. In terms of assembly, forms a 24-polypeptide structural core with octahedral symmetry. Part of the 2-oxoglutarate dehydrogenase (OGDH) complex composed of E1 (2-oxoglutarate dehydrogenase), E2 (dihydrolipoamide succinyltransferase) and E3 (dihydrolipoamide dehydrogenase); the complex contains multiple copies of the three enzymatic components (E1, E2 and E3). (R)-lipoate serves as cofactor.

The enzyme catalyses N(6)-[(R)-dihydrolipoyl]-L-lysyl-[protein] + succinyl-CoA = N(6)-[(R)-S(8)-succinyldihydrolipoyl]-L-lysyl-[protein] + CoA. It functions in the pathway amino-acid degradation; L-lysine degradation via saccharopine pathway; glutaryl-CoA from L-lysine: step 6/6. E2 component of the 2-oxoglutarate dehydrogenase (OGDH) complex which catalyzes the second step in the conversion of 2-oxoglutarate to succinyl-CoA and CO(2). This Buchnera aphidicola subsp. Schizaphis graminum (strain Sg) protein is Dihydrolipoyllysine-residue succinyltransferase component of 2-oxoglutarate dehydrogenase complex (sucB).